A 265-amino-acid polypeptide reads, in one-letter code: Undecaprenyl-diphosphatase 1 (265 aa).

7 consecutive transmembrane segments (helical) span residues 4–24 (IITA…PISS), 42–62 (AKTF…ILYH), 84–104 (FHVF…HDVI), 108–128 (LFQP…MIFA), 184–204 (SEFS…LDLL), 217–237 (MFAV…VTFL), and 245–265 (LKPF…FVLL).

Belongs to the UppP family.

It localises to the cell membrane. The enzyme catalyses di-trans,octa-cis-undecaprenyl diphosphate + H2O = di-trans,octa-cis-undecaprenyl phosphate + phosphate + H(+). Functionally, catalyzes the dephosphorylation of undecaprenyl diphosphate (UPP). Confers resistance to bacitracin. This chain is Undecaprenyl-diphosphatase 1, found in Bacillus anthracis.